The sequence spans 853 residues: DNA mismatch repair protein MutS (853 aa).

Position 616 to 623 (616 to 623) interacts with ATP; that stretch reads GPNMGGKS.

This sequence belongs to the DNA mismatch repair MutS family.

Its function is as follows. This protein is involved in the repair of mismatches in DNA. It is possible that it carries out the mismatch recognition step. This protein has a weak ATPase activity. The polypeptide is DNA mismatch repair protein MutS (Erwinia tasmaniensis (strain DSM 17950 / CFBP 7177 / CIP 109463 / NCPPB 4357 / Et1/99)).